The sequence spans 353 residues: MTARELVCSQRVGQGLSRRLRPLVLAVTLGVLVVTLSGCSWSDALAIGWPEGITPEAHLNRQLWIGAVVASLVVGVIVWGLIFWSTIFHRKKTTDTELPRQFGYNMPLELVLTVTPFLIISMLFYFTVIVQDKMLYLAKDPEVVIDVTAFQWNWKFGYQRVDFKDGTLTYDGVDPARKKAMVSKPEGKDSHGEELVGAVRGLNTEDRAYLNFDKVETLGTTTEIPVLVLPAGKRIEFQLNSADVVHSFWVPKFLFKRDVMPNPVANNSVNVFQVEEITKTGAFVGHCAEMCGTYHSMMNFEVRVVAPNDFKAYLQQRIDGKTNAEALQVIAQPPLAVTTHPFDTRRGQLTNSQ.

The signal sequence occupies residues 1–42; the sequence is MTARELVCSQRVGQGLSRRLRPLVLAVTLGVLVVTLSGCSWS. Helical transmembrane passes span 63-83 and 110-130; these read LWIG…GLIF and LVLT…TVIV. Cu cation is bound by residues H246, C287, C291, and H295.

This sequence belongs to the cytochrome c oxidase subunit 2 family. Requires Cu cation as cofactor. Heme is required as a cofactor.

The protein resides in the cell membrane. The catalysed reaction is 4 Fe(II)-[cytochrome c] + O2 + 8 H(+)(in) = 4 Fe(III)-[cytochrome c] + 2 H2O + 4 H(+)(out). In terms of biological role, subunits I and II form the functional core of the enzyme complex. Electrons originating in cytochrome c are transferred via heme a and Cu(A) to the binuclear center formed by heme a3 and Cu(B). This is Probable cytochrome c oxidase subunit 2 (ctaC) from Mycobacterium leprae (strain TN).